The chain runs to 785 residues: (+)-copalyl diphosphate synthase 3, chloroplastic (785 aa).

A substrate-binding site is contributed by Lys238. Residues Asp371 and Asp373 each contribute to the Mg(2+) site. The short motif at 371 to 374 (DIDD) is the DXDD motif element. Substrate is bound at residue Lys457.

This sequence belongs to the terpene synthase family. The cofactor is Mg(2+). In terms of tissue distribution, present in both leaves and flowers, with higher levels in leaves.

It is found in the plastid. It localises to the chloroplast. The enzyme catalyses (2E,6E,10E)-geranylgeranyl diphosphate = (+)-copalyl diphosphate. It participates in secondary metabolite biosynthesis; terpenoid biosynthesis. Its function is as follows. Involved in the biosynthesis of labdane-type diterpenoid including marrubiin and other labdane-related furanoid diterpenoids with potential applications as anti-diabetics, analgesics or vasorelaxants. Terpene synthase that produces (+)-copalyl diphosphate ((+)-CPP) from geranylgeranyl diphosphate (GGPP). The sequence is that of (+)-copalyl diphosphate synthase 3, chloroplastic from Marrubium vulgare (White horehound).